The sequence spans 68 residues: Peptide Hp1090 (68 aa).

The N-terminal stretch at 1–23 (MKTQFAIFLITLVLFQMFSQSDA) is a signal peptide. At Phe-36 the chain carries Phenylalanine amide. Positions 40–68 (GLSDLDDLDESFDGEVSQADIDFLKELMQ) are excised as a propeptide.

It belongs to the non-disulfide-bridged peptide (NDBP) superfamily. Short antimicrobial peptide (group 4) family. In terms of tissue distribution, expressed by the venom gland.

It is found in the secreted. The protein resides in the target cell membrane. Its function is as follows. Amphipathic peptide which inhibits the growth of Gram-positive bacteria. In Heterometrus petersii (Asian forest scorpion), this protein is Peptide Hp1090.